The sequence spans 221 residues: GDP-perosamine N-acetyltransferase (221 aa).

H139 acts as the Proton acceptor in catalysis.

This sequence belongs to the transferase hexapeptide repeat family. In terms of assembly, homotrimer.

The enzyme catalyses GDP-alpha-D-perosamine + acetyl-CoA = GDP-N-acetyl-alpha-D-perosamine + CoA + H(+). The protein operates within bacterial outer membrane biogenesis; LPS O-antigen biosynthesis. In terms of biological role, catalyzes the transfer of an acetyl residue from acetyl-CoA onto GDP-perosamine to form GDP-N-acetyl-perosamine. This Escherichia coli O157:H7 protein is GDP-perosamine N-acetyltransferase.